The following is a 536-amino-acid chain: Mitogen-activated protein kinase kinase kinase mom-4 (536 aa).

Over residues 1-20 (MDNSSQSKPSSSSSSHSPSP) the composition is skewed to low complexity. A disordered region spans residues 1–34 (MDNSSQSKPSSSSSSHSPSPAAITPTQRTTRDSG). Residues 51–305 (NLNSHYLGKG…SSECVEYFTL (255 aa)) form the Protein kinase domain. ATP is bound by residues 57-65 (LGKGTYGLV) and K84. D176 serves as the catalytic Proton acceptor. The segment at 314 to 438 (SVPLSDSSTN…EHRRDSNDEE (125 aa)) is disordered. 2 stretches are compositionally biased toward polar residues: residues 315–325 (VPLSDSSTNGP) and 350–366 (NNRT…QQPG). Over residues 405 to 438 (KNFRDRAKSEQRQPHRDARPPPPFEHRRDSNDEE) the composition is skewed to basic and acidic residues.

Belongs to the protein kinase superfamily. STE Ser/Thr protein kinase family. MAP kinase kinase kinase subfamily. Interacts with, and is activated by, tap-1. The cofactor is Mg(2+). Post-translationally, may be autophosphorylated.

The enzyme catalyses L-seryl-[protein] + ATP = O-phospho-L-seryl-[protein] + ADP + H(+). The catalysed reaction is L-threonyl-[protein] + ATP = O-phospho-L-threonyl-[protein] + ADP + H(+). Its function is as follows. Part of the Wnt signaling pathway essential for the specification of the mesodermal cell fate in early embryos. Stimulates the wrm-1/lit-1-dependent phosphorylation of pop-1 and plays a role in the initial nuclear accumulation of wrm-1. The chain is Mitogen-activated protein kinase kinase kinase mom-4 from Caenorhabditis elegans.